The following is a 282-amino-acid chain: uncharacterized protein (282 aa).

2 disordered regions span residues 1–45 and 201–259; these read MPLE…EEDE and DRRR…KPWG. The span at 10 to 19 shows a compositional bias: basic and acidic residues; the sequence is SEMKEFKEST. The span at 26-38 shows a compositional bias: polar residues; it reads SVSSEETLTQSMV. Positions 201-237 are enriched in basic and acidic residues; it reads DRRRKEDSKARSRLTRREEHSEHHRSGKSRRERERRS.

This is an uncharacterized protein from Ostreid herpesvirus 1 (isolate France) (OsHV-1).